A 154-amino-acid polypeptide reads, in one-letter code: Style cell-cycle inhibitor 1-A (154 aa).

2 stretches are compositionally biased toward basic and acidic residues: residues 1–11 and 24–48; these read MGSDKKTPEEK and DEVK…DKSK. The interval 1–84 is disordered; it reads MGSDKKTPEE…DKSKNKFEEL (84 aa). Positions 63 to 77 are enriched in basic residues; sequence GEKHKTKSHKHKDKS.

Specifically expressed in flowers pistils, especially in stigmas and styles. Barely detected in roots, stems, leaves, sepals, petals and stamen.

The protein localises to the nucleus. Component of the auxin signaling transduction pathway that regulates cell proliferation and differentiation during flowers stigmas and styles development. Involved in the regulation of auxin-related genes. The chain is Style cell-cycle inhibitor 1-A from Nicotiana tabacum (Common tobacco).